Here is a 648-residue protein sequence, read N- to C-terminus: MERKVLALQARKKRTKAKKDKAQRKPETQHRGSAPHSESDIPEQEEEILGSDDDEQEDPNDYCKGGYHLVKIGDLFNGRYHVIRKLGWGHFSTVWLSWDIQGKKFVAMKVVKSAEHYTETALDEIRLLKSVRNSDPNDPNGEMVVQLLDDFKISGVNGTHICMVFEVLGHHLLKWIIKSNYQGLPLPCVKKIIQQVLQGLDYLHTKCRIIHTDIKPENILLSVNEQYIRRLAAEATEWQRSGAPPPSGSAVSTAPQPKPADKMSKNKKKKLKKKQKRQAELLEKRMQEIEEMEKESGPGQKRPNKQEESESPVDRPLTENPPNKMTQEKLEESNSIGQDQTLTERGGEGGAPEINCNGVIGVVNYPENSNNETLRHKEDLHNANDCDVHTLKQEPSFLNSSNGDSSPSQDTDSCTPTASETMVCQSSAEQSLTRQDITQLEESIRADTPSGDEQEPNGALDSKGKFSAGNFLINPLEPKNAEKLQVKIADLGNACWVHKHFTEDIQTRQYRSLEVLIGSGYNTPADIWSTACMAFELATGDYLFEPHSGEDYTRDEDHIALIIELLGKVPRKLIVAGKYSKEFFTKKGDLKHITKLKPWGLLEVLVEKYEWPQEEAAGFTDFLLPMLELMPEKRATAAECLRHPWLNS.

The interval 1–57 (MERKVLALQARKKRTKAKKDKAQRKPETQHRGSAPHSESDIPEQEEEILGSDDDEQE) is disordered. Positions 10–22 (ARKKRTKAKKDKA) are enriched in basic residues. Residues 40–57 (DIPEQEEEILGSDDDEQE) show a composition bias toward acidic residues. Serine 51 is subject to Phosphoserine. Residues 80–646 (YHVIRKLGWG…AAECLRHPWL (567 aa)) form the Protein kinase domain. ATP-binding positions include 86 to 94 (LGWGHFSTV) and lysine 109. Aspartate 213 serves as the catalytic Proton acceptor. Disordered stretches follow at residues 238–354 (WQRS…APEI) and 395–464 (PSFL…DSKG). A compositionally biased stretch (basic residues) spans 265-276 (KNKKKKLKKKQK). Basic and acidic residues-rich tracts occupy residues 277-288 (RQAELLEKRMQE) and 304-317 (NKQE…DRPL). Phosphoserine occurs at positions 309, 311, and 333. 2 stretches are compositionally biased toward polar residues: residues 333–343 (SNSIGQDQTLT) and 396–441 (SFLN…TQLE). Residue threonine 448 is modified to Phosphothreonine. A Phosphoserine modification is found at serine 450. A Phosphoserine; by CK2 modification is found at serine 548.

This sequence belongs to the protein kinase superfamily. CMGC Ser/Thr protein kinase family. Monomer. Found in a multisubunit complex containing seven proteins, named toposome, which separates entangled circular chromatin DNA during chromosome segregation. Interacts with HHV-1 ICP27 protein. Interacts with DNAJC8 and AHSA1/AHA1 and this mediates formation of a complex with the Hsp70 /Hsp90 machinery. Binds to IGF2BP1, SYNCRIP, HNRNPA2B1 and HNRNPC. Interacts with SAFB/SAFB1 and SAFB2 which inhibits its activity. It depends on Mg(2+) as a cofactor. As to expression, predominantly expressed in the testis but is also present at lower levels in heart, spleen, liver, brain, kidney, lung and skeletal muscle. Present in all germinal cells in the seminiferous tubules but not in mature spermatozoa.

It localises to the cytoplasm. The protein localises to the nucleus. The protein resides in the nucleoplasm. Its subcellular location is the nucleus matrix. It is found in the microsome. It localises to the nucleus speckle. The protein localises to the chromosome. It catalyses the reaction L-seryl-[protein] + ATP = O-phospho-L-seryl-[protein] + ADP + H(+). It carries out the reaction L-threonyl-[protein] + ATP = O-phospho-L-threonyl-[protein] + ADP + H(+). Its activity is regulated as follows. Activated by phosphorylation on Ser-51 and Ser-548. In terms of biological role, serine/arginine-rich protein-specific kinase which specifically phosphorylates its substrates at serine residues located in regions rich in arginine/serine dipeptides, known as RS domains and is involved in the phosphorylation of SR splicing factors and the regulation of splicing. Plays a central role in the regulatory network for splicing, controlling the intranuclear distribution of splicing factors in interphase cells and the reorganization of nuclear speckles during mitosis. Can influence additional steps of mRNA maturation, as well as other cellular activities, such as chromatin reorganization in somatic and sperm cells and cell cycle progression. Phosphorylates SFRS2, ZRSR2, LBR and PRM1. Phosphorylates SRSF1 using a directional (C-terminal to N-terminal) and a dual-track mechanism incorporating both processive phosphorylation (in which the kinase stays attached to the substrate after each round of phosphorylation) and distributive phosphorylation steps (in which the kinase and substrate dissociate after each phosphorylation event). The RS domain of SRSF1 binds first to a docking groove in the large lobe of the kinase domain of SRPK1. This induces certain structural changes in SRPK1 and/or RRM2 domain of SRSF1, allowing RRM2 to bind the kinase and initiate phosphorylation. The cycles continue for several phosphorylation steps in a processive manner (steps 1-8) until the last few phosphorylation steps (approximately steps 9-12). During that time, a mechanical stress induces the unfolding of the beta-4 motif in RRM2, which then docks at the docking groove of SRPK1. This also signals RRM2 to begin to dissociate, which facilitates SRSF1 dissociation after phosphorylation is completed. Can mediate hepatitis B virus (HBV) core protein phosphorylation. It plays a negative role in the regulation of HBV replication through a mechanism not involving the phosphorylation of the core protein but by reducing the packaging efficiency of the pregenomic RNA (pgRNA) without affecting the formation of the viral core particles. Can induce splicing of exon 10 in MAPT/TAU. This Mus musculus (Mouse) protein is SRSF protein kinase 1.